The chain runs to 99 residues: uncharacterized protein (99 aa).

Residues 43–95 are a coiled coil; sequence ENEEIYADQVRRIKLRLRELRETYATSEDNWRELMDNLEELRDQIERLAIRGG.

This is an uncharacterized protein from Archaeoglobus fulgidus (strain ATCC 49558 / DSM 4304 / JCM 9628 / NBRC 100126 / VC-16).